The following is a 50-amino-acid chain: U37-theraphotoxin-Cg1a (50 aa).

Residues 1–19 form the signal peptide; the sequence is MRVLLIIAGLALLSVVCYT.

This sequence belongs to the neurotoxin 10 (Hwtx-1) family. 67 (Jztx-67) subfamily. In terms of tissue distribution, expressed by the venom gland.

It localises to the secreted. The protein is U37-theraphotoxin-Cg1a of Chilobrachys guangxiensis (Chinese earth tiger tarantula).